The primary structure comprises 95 residues: Integration host factor subunit beta (95 aa).

This sequence belongs to the bacterial histone-like protein family. Heterodimer of an alpha and a beta chain.

In terms of biological role, this protein is one of the two subunits of integration host factor, a specific DNA-binding protein that functions in genetic recombination as well as in transcriptional and translational control. This Paracoccus denitrificans (strain Pd 1222) protein is Integration host factor subunit beta.